A 429-amino-acid polypeptide reads, in one-letter code: Adenylosuccinate synthetase (429 aa).

Residues 12 to 18 and 40 to 42 contribute to the GTP site; these read GDEGKGK and GHT. Residue Asp-13 is the Proton acceptor of the active site. 2 residues coordinate Mg(2+): Asp-13 and Gly-40. IMP is bound by residues 13-16, 38-41, Thr-129, Arg-143, Gln-224, Thr-239, and Arg-303; these read DEGK and NAGH. His-41 functions as the Proton donor in the catalytic mechanism. 299–305 serves as a coordination point for substrate; the sequence is VTTGRAR. GTP is bound by residues Arg-305, 331-333, and 413-415; these read KLD and GVG.

The protein belongs to the adenylosuccinate synthetase family. Homodimer. Mg(2+) is required as a cofactor.

The protein localises to the cytoplasm. The catalysed reaction is IMP + L-aspartate + GTP = N(6)-(1,2-dicarboxyethyl)-AMP + GDP + phosphate + 2 H(+). Its pathway is purine metabolism; AMP biosynthesis via de novo pathway; AMP from IMP: step 1/2. Plays an important role in the de novo pathway of purine nucleotide biosynthesis. Catalyzes the first committed step in the biosynthesis of AMP from IMP. In Rhodococcus opacus (strain B4), this protein is Adenylosuccinate synthetase.